A 114-amino-acid polypeptide reads, in one-letter code: Fumarate reductase subunit D (114 aa).

3 consecutive transmembrane segments (helical) span residues 27–47 (ICFP…LIPM), 50–70 (IIVF…TIFP), and 94–114 (WLFY…VIAL).

The protein belongs to the FrdD family. As to quaternary structure, part of an enzyme complex containing four subunits: a flavoprotein (FrdA), an iron-sulfur protein (FrdB), and two hydrophobic anchor proteins (FrdC and FrdD).

It localises to the cell inner membrane. In terms of biological role, anchors the catalytic components of the fumarate reductase complex to the cell membrane, binds quinones. The chain is Fumarate reductase subunit D from Haemophilus ducreyi (strain 35000HP / ATCC 700724).